The chain runs to 309 residues: Homoserine kinase (309 aa).

ATP is bound at residue 95-105 (PQSRGLGSSAA).

This sequence belongs to the GHMP kinase family. Homoserine kinase subfamily.

The protein localises to the cytoplasm. The catalysed reaction is L-homoserine + ATP = O-phospho-L-homoserine + ADP + H(+). Its pathway is amino-acid biosynthesis; L-threonine biosynthesis; L-threonine from L-aspartate: step 4/5. Catalyzes the ATP-dependent phosphorylation of L-homoserine to L-homoserine phosphate. The polypeptide is Homoserine kinase (Corynebacterium glutamicum (strain R)).